Here is a 266-residue protein sequence, read N- to C-terminus: Putative cysteine-rich repeat secretory protein 20 (266 aa).

The N-terminal stretch at 1–33 is a signal peptide; it reads MYFPPSSVPKRLVLVHISAVVAIKLLLIRSVSS. Gnk2-homologous domains follow at residues 40–142 and 148–261; these read YLQH…SIRN and YNNN…LYPF.

Belongs to the cysteine-rich repeat secretory protein family.

The protein localises to the secreted. This Arabidopsis thaliana (Mouse-ear cress) protein is Putative cysteine-rich repeat secretory protein 20 (CRRSP20).